Consider the following 132-residue polypeptide: SH2 domain-containing protein 1B2 (132 aa).

An SH2 domain is found at 5-101; sequence YYHGCLTKRE…GMVVHLSNPI (97 aa).

In terms of assembly, interacts with SLAMF1 (phosphorylated). Interacts with CD244. Interacts with Src kinases HCK, LYN, FYN, FGR and LCK (via kinase domains). As to expression, expressed in spleen. Expressed in macrophages, CD8(+) T-Cells and NK cells. Conflictingly found only in NK cells.

It is found in the cytoplasm. Its function is as follows. Cytoplasmic adapter regulating receptors of the signaling lymphocytic activation molecule (SLAM) family. In SLAM signaling may cooperate with Sh2d1a/SAP. Plays a role in regulation of effector functions of natural killer (NK) cells by controlling signal transduction through Cd244/2b4. However, conflicting results are reported which may reflect the use of different strain backgrounds. Proposed to act as an inhibitor of Cd244-mediated NK cell function including cytotoxicity and IFN-gamma production, the latter found also by triggering Klra4 and Klrk1 next to Cd244. Seems to positively regulate Cd244- and Cd84-dependent NK cell functions implicating Cd244-mediated phosphorylation of Vav1. The polypeptide is SH2 domain-containing protein 1B2 (Sh2d1b2) (Mus musculus (Mouse)).